Here is a 340-residue protein sequence, read N- to C-terminus: Ras association domain-containing protein 1 (340 aa).

S2 carries the N-acetylserine modification. S2 carries the phosphoserine modification. The segment at 2 to 115 (SAEPELIELR…DLGWDSALER (114 aa)) is mediates interaction with E4F1. The Phorbol-ester/DAG-type zinc finger occupies 51–101 (GHRFQPAGPTTHTWCDLCGDFIWGVVRKGLQCAHCKFTCHYRCRALVCLDC). Residues 175 to 185 (SVPSSKKPPSL) show a composition bias toward low complexity. Residues 175-196 (SVPSSKKPPSLQDARRGTGRST) form a disordered region. Residues 194–288 (RSTAVKRRTS…LSFVLKENDS (95 aa)) enclose the Ras-associating domain. Positions 290 to 337 (EVNWDAFSMPELHNFLRILQREEEEHLRQILQKYSRCRQKIQEALHAC) constitute an SARAH domain. Residues 311-314 (EEEE) form an MOAP1-binding region.

Interacts with MAP1S and XPA. Binds to the N-terminal of CDC20 during prometaphase. Binds to STK3/MST2 and STK4/MST1. Recruited to the TNFRSF1A and TNFRSF10A complexes in response to their respective cognate ligand, after internalization. Can self-associate. Part of a complex with MDM2, DAXX, RASSF1 and USP7. As to quaternary structure, interacts with MOAP1 and E4F1. Interacts with RSSF5 and probably associates with HRAS via a RSSF1 isoform A-RSSF5 heterodimer. Interacts (via C-terminus) with DAXX (via N-terminus); the interaction is independent of MDM2 and TP53. Interacts (via N-terminus) with MDM2 (via C-terminus); the interaction is independent of TP53. Interacts with RAB39A. Interacts with RAB39B; the interaction is weak. In terms of assembly, interacts with ECM2. Interacts with RAB39B; the interaction is strong. Does not interact with RAB39A.

The protein localises to the cytoplasm. Its subcellular location is the cytoskeleton. The protein resides in the microtubule organizing center. It is found in the centrosome. It localises to the spindle. The protein localises to the spindle pole. Its subcellular location is the nucleus. Functionally, potential tumor suppressor. Required for death receptor-dependent apoptosis. Mediates activation of Mediates activation of STK3/MST2 and STK4/MST1 during Fas-induced apoptosis by preventing their dephosphorylation. When associated with MOAP1, promotes BAX conformational change and translocation to mitochondrial membranes in response to TNF and TNFSF10 stimulation. Isoform A interacts with CDC20, an activator of the anaphase-promoting complex, APC, resulting in the inhibition of APC activity and mitotic progression. Inhibits proliferation by negatively regulating cell cycle progression at the level of G1/S-phase transition by regulating accumulation of cyclin D1 protein. Isoform C has been shown not to perform these roles, no function has been identified for this isoform. Isoform A disrupts interactions among MDM2, DAXX and USP7, thus contributing to the efficient activation of TP53 by promoting MDM2 self-ubiquitination in cell-cycle checkpoint control in response to DNA damage. This chain is Ras association domain-containing protein 1, found in Mus musculus (Mouse).